The sequence spans 436 residues: UPF0597 protein YhaM (436 aa).

Belongs to the UPF0597 family.

Functionally, thought to be a D-serine dehydratase, however it does not complement a dsdA (D-serine dehydratase) mutant in strain CFT073, suggesting it may not have that function. The protein is UPF0597 protein YhaM of Escherichia coli O157:H7.